Consider the following 252-residue polypeptide: 14-3-3 protein homolog 1 (252 aa).

It belongs to the 14-3-3 family.

In Schistosoma mansoni (Blood fluke), this protein is 14-3-3 protein homolog 1.